The following is a 432-amino-acid chain: Tol-Pal system protein TolB (432 aa).

An N-terminal signal peptide occupies residues 1 to 29 (MMRNVWKSGLRRSAWIGLLMVLCVGVARA).

Belongs to the TolB family. The Tol-Pal system is composed of five core proteins: the inner membrane proteins TolA, TolQ and TolR, the periplasmic protein TolB and the outer membrane protein Pal. They form a network linking the inner and outer membranes and the peptidoglycan layer.

It is found in the periplasm. Its function is as follows. Part of the Tol-Pal system, which plays a role in outer membrane invagination during cell division and is important for maintaining outer membrane integrity. This Ralstonia nicotianae (strain ATCC BAA-1114 / GMI1000) (Ralstonia solanacearum) protein is Tol-Pal system protein TolB.